Consider the following 438-residue polypeptide: Trigger factor (438 aa).

Residues 163–248 form the PPIase FKBP-type domain; that stretch reads GDKLNIDFEG…VKRIETTEAR (86 aa).

Belongs to the FKBP-type PPIase family. Tig subfamily.

Its subcellular location is the cytoplasm. The catalysed reaction is [protein]-peptidylproline (omega=180) = [protein]-peptidylproline (omega=0). In terms of biological role, involved in protein export. Acts as a chaperone by maintaining the newly synthesized protein in an open conformation. Functions as a peptidyl-prolyl cis-trans isomerase. The sequence is that of Trigger factor from Syntrophomonas wolfei subsp. wolfei (strain DSM 2245B / Goettingen).